Reading from the N-terminus, the 328-residue chain is DNA-directed RNA polymerase subunit alpha (328 aa).

Residues 1-244 (MEKFLKYEIK…EHLNPIVSVN (244 aa)) are alpha N-terminal domain (alpha-NTD). An alpha C-terminal domain (alpha-CTD) region spans residues 261–328 (KVKSFAKQIE…VQELGLKFRS (68 aa)).

The protein belongs to the RNA polymerase alpha chain family. Homodimer. The RNAP catalytic core consists of 2 alpha, 1 beta, 1 beta' and 1 omega subunit. When a sigma factor is associated with the core the holoenzyme is formed, which can initiate transcription.

The catalysed reaction is RNA(n) + a ribonucleoside 5'-triphosphate = RNA(n+1) + diphosphate. In terms of biological role, DNA-dependent RNA polymerase catalyzes the transcription of DNA into RNA using the four ribonucleoside triphosphates as substrates. This Mycoplasma genitalium (strain ATCC 33530 / DSM 19775 / NCTC 10195 / G37) (Mycoplasmoides genitalium) protein is DNA-directed RNA polymerase subunit alpha.